The following is a 228-amino-acid chain: 7-cyano-7-deazaguanine synthase (228 aa).

8 to 18 (LSGGLDSTTCL) serves as a coordination point for ATP. 4 residues coordinate Zn(2+): Cys-188, Cys-198, Cys-201, and Cys-204.

The protein belongs to the QueC family. Requires Zn(2+) as cofactor.

It catalyses the reaction 7-carboxy-7-deazaguanine + NH4(+) + ATP = 7-cyano-7-deazaguanine + ADP + phosphate + H2O + H(+). It functions in the pathway purine metabolism; 7-cyano-7-deazaguanine biosynthesis. Functionally, catalyzes the ATP-dependent conversion of 7-carboxy-7-deazaguanine (CDG) to 7-cyano-7-deazaguanine (preQ(0)). The chain is 7-cyano-7-deazaguanine synthase from Legionella pneumophila (strain Paris).